A 239-amino-acid chain; its full sequence is Orotidine 5'-phosphate decarboxylase (239 aa).

Residues Asp15, Lys37, 64–73 (DLKYHDIPNT), Thr126, Arg187, Gln196, Gly216, and Arg217 contribute to the substrate site. Lys66 serves as the catalytic Proton donor.

It belongs to the OMP decarboxylase family. Type 1 subfamily. As to quaternary structure, homodimer.

It catalyses the reaction orotidine 5'-phosphate + H(+) = UMP + CO2. It participates in pyrimidine metabolism; UMP biosynthesis via de novo pathway; UMP from orotate: step 2/2. Catalyzes the decarboxylation of orotidine 5'-monophosphate (OMP) to uridine 5'-monophosphate (UMP). The sequence is that of Orotidine 5'-phosphate decarboxylase from Geotalea daltonii (strain DSM 22248 / JCM 15807 / FRC-32) (Geobacter daltonii).